The primary structure comprises 500 residues: Probable malate:quinone oxidoreductase (500 aa).

The protein belongs to the MQO family. Requires FAD as cofactor.

It catalyses the reaction (S)-malate + a quinone = a quinol + oxaloacetate. Its pathway is carbohydrate metabolism; tricarboxylic acid cycle; oxaloacetate from (S)-malate (quinone route): step 1/1. This is Probable malate:quinone oxidoreductase from Bacillus cereus (strain AH187).